The following is a 398-amino-acid chain: S-adenosylmethionine synthase (398 aa).

Residue 136-141 (GTGSSD) participates in ATP binding.

This sequence belongs to the AdoMet synthase 2 family. Mg(2+) serves as cofactor.

It catalyses the reaction L-methionine + ATP + H2O = S-adenosyl-L-methionine + phosphate + diphosphate. Its pathway is amino-acid biosynthesis; S-adenosyl-L-methionine biosynthesis; S-adenosyl-L-methionine from L-methionine: step 1/1. Functionally, catalyzes the formation of S-adenosylmethionine from methionine and ATP. This Methanosarcina acetivorans (strain ATCC 35395 / DSM 2834 / JCM 12185 / C2A) protein is S-adenosylmethionine synthase.